A 60-amino-acid chain; its full sequence is Large ribosomal subunit protein bL32 (60 aa).

Over residues 1-16 (MPNPKRRHSKKRTSTR) the composition is skewed to basic residues. The disordered stretch occupies residues 1–28 (MPNPKRRHSKKRTSTRRAHDALKQPGLS).

The protein belongs to the bacterial ribosomal protein bL32 family.

This is Large ribosomal subunit protein bL32 from Solibacter usitatus (strain Ellin6076).